The primary structure comprises 348 residues: Phosphate acyltransferase (348 aa).

This sequence belongs to the PlsX family. As to quaternary structure, homodimer. Probably interacts with PlsY.

The protein localises to the cytoplasm. It carries out the reaction a fatty acyl-[ACP] + phosphate = an acyl phosphate + holo-[ACP]. Its pathway is lipid metabolism; phospholipid metabolism. Catalyzes the reversible formation of acyl-phosphate (acyl-PO(4)) from acyl-[acyl-carrier-protein] (acyl-ACP). This enzyme utilizes acyl-ACP as fatty acyl donor, but not acyl-CoA. This Lactiplantibacillus plantarum (strain ATCC BAA-793 / NCIMB 8826 / WCFS1) (Lactobacillus plantarum) protein is Phosphate acyltransferase.